A 138-amino-acid chain; its full sequence is Holo-[acyl-carrier-protein] synthase (138 aa).

Mg(2+) is bound by residues D8 and E54.

Belongs to the P-Pant transferase superfamily. AcpS family. Mg(2+) is required as a cofactor.

Its subcellular location is the cytoplasm. The catalysed reaction is apo-[ACP] + CoA = holo-[ACP] + adenosine 3',5'-bisphosphate + H(+). Functionally, transfers the 4'-phosphopantetheine moiety from coenzyme A to a Ser of acyl-carrier-protein. This is Holo-[acyl-carrier-protein] synthase from Roseiflexus sp. (strain RS-1).